A 109-amino-acid chain; its full sequence is Phosphoribosyl-ATP pyrophosphatase (109 aa).

It belongs to the PRA-PH family.

The protein localises to the cytoplasm. The catalysed reaction is 1-(5-phospho-beta-D-ribosyl)-ATP + H2O = 1-(5-phospho-beta-D-ribosyl)-5'-AMP + diphosphate + H(+). It participates in amino-acid biosynthesis; L-histidine biosynthesis; L-histidine from 5-phospho-alpha-D-ribose 1-diphosphate: step 2/9. The polypeptide is Phosphoribosyl-ATP pyrophosphatase (Azorhizobium caulinodans (strain ATCC 43989 / DSM 5975 / JCM 20966 / LMG 6465 / NBRC 14845 / NCIMB 13405 / ORS 571)).